Here is a 338-residue protein sequence, read N- to C-terminus: Ferredoxin--NADP reductase (338 aa).

Residues Asp38, Gln46, Tyr51, Val91, Phe125, Asp291, and Thr331 each coordinate FAD.

The protein belongs to the ferredoxin--NADP reductase type 2 family. As to quaternary structure, homodimer. FAD is required as a cofactor.

It catalyses the reaction 2 reduced [2Fe-2S]-[ferredoxin] + NADP(+) + H(+) = 2 oxidized [2Fe-2S]-[ferredoxin] + NADPH. The sequence is that of Ferredoxin--NADP reductase from Orientia tsutsugamushi (strain Ikeda) (Rickettsia tsutsugamushi).